The sequence spans 64 residues: Translation machinery-associated protein 7 (64 aa).

Disordered stretches follow at residues 1 to 38 (MSSR…ADAA) and 45 to 64 (ANMK…SGKK). Residues 27–38 (IAFKEKQKADAA) show a composition bias toward basic and acidic residues. Positions 53–64 (LVGGGIKKSGKK) are enriched in gly residues.

This sequence belongs to the TMA7 family. As to quaternary structure, interacts with the 40S ribosomal subunit.

It localises to the cytoplasm. The protein localises to the nucleus. In terms of biological role, involved in protein synthesis. The sequence is that of Translation machinery-associated protein 7 (TMA7) from Saccharomyces cerevisiae (strain ATCC 204508 / S288c) (Baker's yeast).